We begin with the raw amino-acid sequence, 332 residues long: Arabinogalactan endo-beta-1,4-galactanase (332 aa).

The N-linked (GlcNAc...) asparagine glycan is linked to asparagine 111. Glutamate 135 acts as the Proton donor in catalysis. Glutamate 245 acts as the Nucleophile in catalysis.

This sequence belongs to the glycosyl hydrolase 53 family.

It carries out the reaction The enzyme specifically hydrolyzes (1-&gt;4)-beta-D-galactosidic linkages in type I arabinogalactans.. The protein is Arabinogalactan endo-beta-1,4-galactanase of Humicola insolens (Soft-rot fungus).